The sequence spans 466 residues: Phytase A (466 aa).

Positions 1-19 are cleaved as a signal peptide; sequence MAVLSVLLPITFLLSSVTG. A disulfide bond links C30 and C39. The 1D-myo-inositol hexakisphosphate site is built by Q49, Y50, R80, H81, R84, and T87. 4 disulfides stabilise this stretch: C70–C413, C214–C464, C263–C281, and C435–C443. The Nucleophile role is filled by H81. Residues N104 and N119 are each glycosylated (N-linked (GlcNAc...) asparagine). Position 164 (R164) interacts with 1D-myo-inositol hexakisphosphate. N-linked (GlcNAc...) asparagine glycosylation is found at N206 and N219. Position 300 (K300) interacts with 1D-myo-inositol hexakisphosphate. N-linked (GlcNAc...) asparagine glycans are attached at residues N338 and N351. 1D-myo-inositol hexakisphosphate-binding residues include H360 and D361. The N-linked (GlcNAc...) asparagine glycan is linked to N375.

This sequence belongs to the histidine acid phosphatase family. In terms of assembly, monomer.

It localises to the secreted. The catalysed reaction is 1D-myo-inositol hexakisphosphate + H2O = 1D-myo-inositol 1,2,4,5,6-pentakisphosphate + phosphate. It catalyses the reaction 1D-myo-inositol 1,2,4,5,6-pentakisphosphate + H2O = 1D-myo-inositol 1,2,5,6-tetrakisphosphate + phosphate. It carries out the reaction 1D-myo-inositol 1,2,5,6-tetrakisphosphate + H2O = 1D-myo-inositol 1,2,6-trisphosphate + phosphate. The enzyme catalyses 1D-myo-inositol 1,2,6-trisphosphate + H2O = 1D-myo-inositol 1,2-bisphosphate + phosphate. The catalysed reaction is 1D-myo-inositol 1,2-bisphosphate + H2O = 1D-myo-inositol 2-phosphate + phosphate. In terms of biological role, catalyzes the phosphate monoester hydrolysis of phytic acid (myo-inositol hexakisphosphate), which results in the stepwise formation of myo-inositol pentakis-, tetrakis-, tris-, bis-, and monophosphates, as well as the liberation of inorganic phosphate. Myo-inositol 2-monophosphate is the end product. The chain is Phytase A (phyA) from Aspergillus oryzae (strain ATCC 42149 / RIB 40) (Yellow koji mold).